The sequence spans 189 residues: Elongation factor P (189 aa).

Lysine 34 carries the post-translational modification N6-(3,6-diaminohexanoyl)-5-hydroxylysine.

It belongs to the elongation factor P family. In terms of processing, may be beta-lysylated on the epsilon-amino group of Lys-34 by the combined action of EpmA and EpmB, and then hydroxylated on the C5 position of the same residue by EpmC (if this protein is present). Lysylation is critical for the stimulatory effect of EF-P on peptide-bond formation. The lysylation moiety may extend toward the peptidyltransferase center and stabilize the terminal 3-CCA end of the tRNA. Hydroxylation of the C5 position on Lys-34 may allow additional potential stabilizing hydrogen-bond interactions with the P-tRNA.

Its subcellular location is the cytoplasm. The protein operates within protein biosynthesis; polypeptide chain elongation. Functionally, involved in peptide bond synthesis. Alleviates ribosome stalling that occurs when 3 or more consecutive Pro residues or the sequence PPG is present in a protein, possibly by augmenting the peptidyl transferase activity of the ribosome. Modification of Lys-34 is required for alleviation. In Buchnera aphidicola subsp. Acyrthosiphon pisum (strain APS) (Acyrthosiphon pisum symbiotic bacterium), this protein is Elongation factor P.